The sequence spans 257 residues: Imidazole glycerol phosphate synthase subunit HisF (257 aa).

Active-site residues include D11 and D130.

This sequence belongs to the HisA/HisF family. As to quaternary structure, heterodimer of HisH and HisF.

The protein resides in the cytoplasm. It catalyses the reaction 5-[(5-phospho-1-deoxy-D-ribulos-1-ylimino)methylamino]-1-(5-phospho-beta-D-ribosyl)imidazole-4-carboxamide + L-glutamine = D-erythro-1-(imidazol-4-yl)glycerol 3-phosphate + 5-amino-1-(5-phospho-beta-D-ribosyl)imidazole-4-carboxamide + L-glutamate + H(+). It functions in the pathway amino-acid biosynthesis; L-histidine biosynthesis; L-histidine from 5-phospho-alpha-D-ribose 1-diphosphate: step 5/9. Its function is as follows. IGPS catalyzes the conversion of PRFAR and glutamine to IGP, AICAR and glutamate. The HisF subunit catalyzes the cyclization activity that produces IGP and AICAR from PRFAR using the ammonia provided by the HisH subunit. The protein is Imidazole glycerol phosphate synthase subunit HisF of Shewanella halifaxensis (strain HAW-EB4).